The primary structure comprises 258 residues: HTH-type transcriptional repressor GlcR (258 aa).

An HTH deoR-type domain is found at 3–58 (QEERLVAILDFLKQHNRITTEQICTLLQVSRDTARRDLVKLEEQNAIIRTRGGAIL). Positions 20-39 (ITTEQICTLLQVSRDTARRD) form a DNA-binding region, H-T-H motif.

Plays a role in carbon catabolite repression (CCR). Specifically required for transcriptional repression of the levanase operon by glucose but not by other sugars. This chain is HTH-type transcriptional repressor GlcR (glcR), found in Bacillus subtilis (strain 168).